Consider the following 241-residue polypeptide: Probable WRKY transcription factor 63 (241 aa).

The tract at residues 56 to 79 (NSPNRQPHHESSSRDMAGLVPQRS) is disordered. The WRKY DNA-binding region spans 97 to 165 (SPNPRLDDGF…YLGQHTCKAF (69 aa)).

It belongs to the WRKY group III family.

The protein resides in the nucleus. Functionally, transcription factor. Interacts specifically with the W box (5'-(T)TGAC[CT]-3'), a frequently occurring elicitor-responsive cis-acting element. The polypeptide is Probable WRKY transcription factor 63 (WRKY63) (Arabidopsis thaliana (Mouse-ear cress)).